A 255-amino-acid chain; its full sequence is 2-dehydro-3,6-dideoxy-6-sulfogluconate aldolase (255 aa).

The active-site Proton acceptor is H38. 2 residues coordinate a divalent metal cation: E141 and D167.

The protein belongs to the HpcH/HpaI aldolase family. In terms of assembly, homohexamer; trimer of dimers. Requires a divalent metal cation as cofactor.

It catalyses the reaction 2-dehydro-3,6-dideoxy-6-sulfo-D-gluconate = (2S)-3-sulfolactaldehyde + pyruvate. Functionally, catalyzes the retro-aldol cleavage of 2-dehydro-3,6-dideoxy-6-sulfo-D-gluconate to (2S)-3-sulfolactaldehyde and pyruvate. Is involved in a degradation pathway of sulfoquinovose (SQ) that allows P.putida SQ1 to use SQ as the sole carbon and energy source for growth. This Pseudomonas putida (Arthrobacter siderocapsulatus) protein is 2-dehydro-3,6-dideoxy-6-sulfogluconate aldolase.